A 269-amino-acid chain; its full sequence is Putative 12-oxophytodienoate reductase-like protein 2A (269 aa).

FMN contacts are provided by residues 28–30 (PLT) and Gln-103. 175-178 (HGAH) serves as a coordination point for substrate. Residue Tyr-180 is the Proton donor of the active site. Residue Arg-227 coordinates FMN.

This sequence belongs to the NADH:flavin oxidoreductase/NADH oxidase family. It depends on FMN as a cofactor.

Functionally, putative oxophytodienoate reductase that may be involved in the biosynthesis or metabolism of oxylipin signaling molecules. This chain is Putative 12-oxophytodienoate reductase-like protein 2A, found in Arabidopsis thaliana (Mouse-ear cress).